Consider the following 381-residue polypeptide: E3 ubiquitin-protein ligase RNF34 (381 aa).

An FYVE-type zinc finger spans residues 56–107 (EGPNIVCKACGLSFSVFRKKHVCCDCKKDFCSLCSVSQENLRRCSTCHLLQE). One can recognise an SAP 1 domain in the interval 115-134 (LMRLKVKDLRQYLLLRNVPT). Ser169 is subject to Phosphoserine. The segment at 216-261 (LASANTDDEDGEEDDDDDDDDDDEDDDEQEENLEEQNPGLSKKKAR) is disordered. Over residues 221 to 249 (TDDEDGEEDDDDDDDDDDEDDDEQEENLE) the composition is skewed to acidic residues. Ser263 and Ser265 each carry phosphoserine. Residues 273–287 (VEGMSVRQLKEILAR) enclose the SAP 2 domain. The RING-type zinc finger occupies 334-369 (CRICMDAVIDCVLLECGHMVTCTKCGKRMSECPICR).

In terms of assembly, interacts with CASP8 and CASP10. Interacts with p53/TP53; involved in p53/TP53 ubiquitination. Interacts (via RING-type zinc finger) with MDM2; the interaction stabilizes MDM2. Interacts (via RING-type zinc finger) with PPARGC1A. Interacts with NOD1. Proteolytically cleaved by caspases upon induction of apoptosis by TNF. Post-translationally, autoubiquitinated (in vitro). In terms of tissue distribution, ubiquitous. Detected in brain, cerebellum, midbrain, hippocampus, striatum, heart, lung, kidney, muscle, spleen and testis.

It is found in the cell membrane. It localises to the endomembrane system. The protein localises to the nucleus. The protein resides in the nucleus speckle. Its subcellular location is the cytoplasm. It is found in the cytosol. The catalysed reaction is S-ubiquitinyl-[E2 ubiquitin-conjugating enzyme]-L-cysteine + [acceptor protein]-L-lysine = [E2 ubiquitin-conjugating enzyme]-L-cysteine + N(6)-ubiquitinyl-[acceptor protein]-L-lysine.. Its pathway is protein modification; protein ubiquitination. Functionally, E3 ubiquitin-protein ligase that regulates several biological processes through the ubiquitin-mediated proteasomal degradation of various target proteins. Ubiquitinates the caspases CASP8 and CASP10, promoting their proteasomal degradation, to negatively regulate cell death downstream of death domain receptors in the extrinsic pathway of apoptosis. May mediate 'Lys-48'-linked polyubiquitination of RIPK1 and its subsequent proteasomal degradation thereby indirectly regulating the tumor necrosis factor-mediated signaling pathway. Negatively regulates p53/TP53 through its direct ubiquitination and targeting to proteasomal degradation. Indirectly, may also negatively regulate p53/TP53 through ubiquitination and degradation of SFN. Mediates PPARGC1A proteasomal degradation probably through ubiquitination thereby indirectly regulating the metabolism of brown fat cells. Possibly involved in innate immunity, through 'Lys-48'-linked polyubiquitination of NOD1 and its subsequent proteasomal degradation. The sequence is that of E3 ubiquitin-protein ligase RNF34 from Rattus norvegicus (Rat).